The following is a 187-amino-acid chain: Dihydrofolate reductase 2, mitochondrial (187 aa).

Residues 4–185 (LLNCIVAVSQ…IKYKFEVCEK (182 aa)) form the DHFR domain. NADP(+)-binding positions include Ala-10 and 16–22 (GIGKNGD). 31-36 (EFRYFQ) provides a ligand contact to substrate. 55 to 57 (RKT) contributes to the NADP(+) binding site. Arg-71 provides a ligand contact to substrate. NADP(+) contacts are provided by residues 77 to 79 (SRE) and 117 to 124 (GGSSVYKE).

It belongs to the dihydrofolate reductase family. As to expression, expressed in numerous cell lines.

The protein resides in the mitochondrion. The protein localises to the mitochondrion matrix. It is found in the mitochondrion inner membrane. It catalyses the reaction (6S)-5,6,7,8-tetrahydrofolate + NADP(+) = 7,8-dihydrofolate + NADPH + H(+). The protein operates within cofactor biosynthesis; tetrahydrofolate biosynthesis; 5,6,7,8-tetrahydrofolate from 7,8-dihydrofolate: step 1/1. In terms of biological role, key enzyme in folate metabolism. Contributes to the de novo mitochondrial thymidylate biosynthesis pathway. Required to prevent uracil accumulation in mtDNA. Binds its own mRNA and that of DHFR. This is Dihydrofolate reductase 2, mitochondrial from Homo sapiens (Human).